Consider the following 66-residue polypeptide: UPF0434 protein RPC_0266 (66 aa).

It belongs to the UPF0434 family.

The protein is UPF0434 protein RPC_0266 of Rhodopseudomonas palustris (strain BisB18).